The following is a 397-amino-acid chain: MAKAKFQRTKPHVNIGTIGHIDHGKTTLTAAITKVLHDRFPDLNPFTPFDQIDKAPEERQRGITISIAHVEYQTEARHYAHVDCPGHADYIKNMITGAAQMDGAILVVAATDGPMPQTKEHVLLARQVGVPYIVVALNKTDMVDDEEILELVELEVRELLTEYEFPGDDVPVVKVSALRALEGDPRWTRSVLELLDAVDEFVPEPVRDVDRPFLMPIEDVFTITGRGTVVTGRIERGTLNVNTEVEIIGIHEQRTRTTVTGIEMFRKLLDEGRAGENVGLLLRGVKREQVERGQVVIRPGSVTPHTQFEAQAYILSKDEGGRHTPFFENYRPQFYFRTTDVTGVVTLPKGTEMVMPGDNTAMHVQLIQPIAMEEGLKFAIREGGRTVGAGQVTRIVK.

In terms of domain architecture, tr-type G spans 10–206 (KPHVNIGTIG…AVDEFVPEPV (197 aa)). The G1 stretch occupies residues 19–26 (GHIDHGKT). 19–26 (GHIDHGKT) contributes to the GTP binding site. A Mg(2+)-binding site is contributed by T26. The G2 stretch occupies residues 62-66 (GITIS). Positions 83 to 86 (DCPG) are G3. GTP-binding positions include 83-87 (DCPGH) and 138-141 (NKTD). The tract at residues 138 to 141 (NKTD) is G4. Residues 176–178 (SAL) are G5.

The protein belongs to the TRAFAC class translation factor GTPase superfamily. Classic translation factor GTPase family. EF-Tu/EF-1A subfamily. Monomer.

The protein resides in the cytoplasm. It carries out the reaction GTP + H2O = GDP + phosphate + H(+). Functionally, GTP hydrolase that promotes the GTP-dependent binding of aminoacyl-tRNA to the A-site of ribosomes during protein biosynthesis. In Streptomyces ramocissimus, this protein is Elongation factor Tu-2.